We begin with the raw amino-acid sequence, 122 residues long: Large ribosomal subunit protein uL14 (122 aa).

It belongs to the universal ribosomal protein uL14 family. As to quaternary structure, part of the 50S ribosomal subunit. Forms a cluster with proteins L3 and L19. In the 70S ribosome, L14 and L19 interact and together make contacts with the 16S rRNA in bridges B5 and B8.

Binds to 23S rRNA. Forms part of two intersubunit bridges in the 70S ribosome. This Streptococcus uberis (strain ATCC BAA-854 / 0140J) protein is Large ribosomal subunit protein uL14.